The chain runs to 372 residues: SAM domain-containing protein SAMSN-1 (372 aa).

Residues 1-71 are disordered; the sequence is MLKRKPSNAS…SGGSLGKKVR (71 aa). An Important for interaction with 14-3-3 proteins motif is present at residues 20–25; the sequence is RSSSFG. 2 positions are modified to phosphoserine: S23 and S34. Positions 37 to 49 are enriched in basic and acidic residues; sequence KSDDSIEVHDREL. Low complexity predominate over residues 52-63; that stretch reads GSEEQSKTSSSG. Position 74 is a phosphoserine (S74). T76 carries the post-translational modification Phosphothreonine. Residues S90, S97, and S119 each carry the phosphoserine modification. The tract at residues 90 to 111 is disordered; the sequence is SEEKEEESGEEALPYRNSDPMI. Residues 129–146 show a composition bias toward low complexity; it reads LYSGQSSSSGITSCSDGT. The segment at 129-153 is disordered; that stretch reads LYSGQSSSSGITSCSDGTSNRDSFR. Y160 is modified (phosphotyrosine). Residues 163–224 enclose the SH3 domain; that stretch reads PFCGRAKVHT…KFIYVDVILE (62 aa). An SAM domain is found at 241–305; that stretch reads ENHQTIQEFL…LSAAESLLDE (65 aa). The interval 304 to 372 is disordered; that stretch reads DEETTVEHEK…QKIAITESSD (69 aa). Residues 317-329 are compositionally biased toward polar residues; sequence PLSSNPDILSASQ.

Interacts with FASLG. Interacts with phosphotyrosine containing proteins. Interacts (via SH3 domain) with CTTN. Interacts (phosphorylated at Ser-23) with YWHAB, YWHAE, YWHAG, YWHAH, YWHAZ and SFN. Interacts directly with SAP30 and HDAC1. Identified in a complex with SAP30 and HDAC1. In terms of tissue distribution, detected in spleen and lymph node (at protein level).

It is found in the nucleus. Its subcellular location is the cytoplasm. The protein localises to the cell projection. It localises to the ruffle. Functionally, negative regulator of B-cell activation. Down-regulates cell proliferation (in vitro). Promotes RAC1-dependent membrane ruffle formation and reorganization of the actin cytoskeleton. Regulates cell spreading and cell polarization. Stimulates HDAC1 activity. Regulates LYN activity by modulating its tyrosine phosphorylation. The sequence is that of SAM domain-containing protein SAMSN-1 (Samsn1) from Mus musculus (Mouse).